The chain runs to 239 residues: Serine protease SplC (239 aa).

An N-terminal signal peptide occupies residues 1–36; that stretch reads MNKNIVIKSMAALAILTSVTGINAAVVEETQQIANA. Catalysis depends on charge relay system residues H75, D113, and S193.

This sequence belongs to the peptidase S1B family.

It localises to the secreted. The polypeptide is Serine protease SplC (splC) (Staphylococcus aureus (strain USA300 / TCH1516)).